A 379-amino-acid polypeptide reads, in one-letter code: 3-dehydroquinate synthase (379 aa).

NAD(+)-binding positions include 67–72 (SGEKNK), 101–105 (GVVLD), 125–126 (TT), K138, and K147. Residues E180, H242, and H258 each coordinate Zn(2+).

Belongs to the sugar phosphate cyclases superfamily. Dehydroquinate synthase family. The cofactor is NAD(+). It depends on Co(2+) as a cofactor. Zn(2+) serves as cofactor.

The protein localises to the cytoplasm. It catalyses the reaction 7-phospho-2-dehydro-3-deoxy-D-arabino-heptonate = 3-dehydroquinate + phosphate. It functions in the pathway metabolic intermediate biosynthesis; chorismate biosynthesis; chorismate from D-erythrose 4-phosphate and phosphoenolpyruvate: step 2/7. Catalyzes the conversion of 3-deoxy-D-arabino-heptulosonate 7-phosphate (DAHP) to dehydroquinate (DHQ). The sequence is that of 3-dehydroquinate synthase from Chlamydia abortus (strain DSM 27085 / S26/3) (Chlamydophila abortus).